The primary structure comprises 1168 residues: TBC1 domain family member 1 (1168 aa).

S146 is modified (phosphoserine). Residues 203 to 238 are disordered; that stretch reads VSGSRGSESPRPNPPHAAPTGSQEPVRRPMRKSFSQ. S235 carries the post-translational modification Phosphoserine; by PKB/AKT1. Position 237 is a phosphoserine (S237). The 159-residue stretch at 246-404 folds into the PID domain; the sequence is FRKELQDGGL…LHKLCERIEG (159 aa). S503 carries the post-translational modification Phosphoserine. Position 505 is a phosphothreonine; by PKB/AKT1 (T505). Phosphoserine occurs at positions 507, 525, and 527. The segment covering 532-542 has biased composition (low complexity); sequence SSLSSTLSNTS. 2 disordered regions span residues 532 to 551 and 564 to 587; these read SSLSSTLSNTSKEPSVCEKE and GSSEDLSSDSESHLPEEPAPLSPQ. 5 positions are modified to phosphoserine: S565, S566, S570, S571, and S585. T596 carries the phosphothreonine modification. A Phosphoserine modification is found at S614. S627 bears the Phosphoserine; by PKB/AKT1 mark. Disordered stretches follow at residues 628–658 and 678–717; these read VSTETPHERKDFESKANHLGDSGGTPVKTRR and SSSRYEDYSELGELPPRSPLEPVCEDGPFGPPPEEKKRTS. A compositionally biased stretch (basic and acidic residues) spans 632–645; sequence TPHERKDFESKANH. Residues S695 and S941 each carry the phosphoserine modification. Residues 800 to 994 enclose the Rab-GAP TBC domain; the sequence is GVPRHHRGEI…RVFDMIFLQG (195 aa). Y952 bears the Phosphotyrosine mark. T1131 carries the phosphothreonine modification. Over residues 1145-1159 the composition is skewed to basic and acidic residues; that stretch reads ELRRRSAEPSDREPE. The tract at residues 1145 to 1168 is disordered; it reads ELRRRSAEPSDREPECTQPEPTGD.

In terms of assembly, interacts with APPL2 (via BAR domain); interaction is dependent of TBC1D1 phosphorylation at Ser-235; interaction diminishes the phosphorylation of TBC1D1 at Thr-596, resulting in inhibition of SLC2A4/GLUT4 translocation and glucose uptake. In terms of processing, insulin-stimulated phosphorylation by AKT family kinases stimulates SLC2A4/GLUT4 translocation.

The protein localises to the nucleus. May act as a GTPase-activating protein for Rab family protein(s). May play a role in the cell cycle and differentiation of various tissues. Involved in the trafficking and translocation of GLUT4-containing vesicles and insulin-stimulated glucose uptake into cells. This chain is TBC1 domain family member 1 (TBC1D1), found in Homo sapiens (Human).